We begin with the raw amino-acid sequence, 601 residues long: Elongation factor 4 (601 aa).

In terms of domain architecture, tr-type G spans 5 to 188 (SHIRNFAIIA…ALVLRLPPPT (184 aa)). GTP contacts are provided by residues 17–22 (DHGKST) and 135–138 (NKID).

Belongs to the TRAFAC class translation factor GTPase superfamily. Classic translation factor GTPase family. LepA subfamily.

Its subcellular location is the cell inner membrane. It catalyses the reaction GTP + H2O = GDP + phosphate + H(+). In terms of biological role, required for accurate and efficient protein synthesis under certain stress conditions. May act as a fidelity factor of the translation reaction, by catalyzing a one-codon backward translocation of tRNAs on improperly translocated ribosomes. Back-translocation proceeds from a post-translocation (POST) complex to a pre-translocation (PRE) complex, thus giving elongation factor G a second chance to translocate the tRNAs correctly. Binds to ribosomes in a GTP-dependent manner. This Rhodospirillum rubrum (strain ATCC 11170 / ATH 1.1.1 / DSM 467 / LMG 4362 / NCIMB 8255 / S1) protein is Elongation factor 4.